The sequence spans 452 residues: MQRRIMGIETEFGITCTFHGQRRLSPDEVARYLFRRVVSWGRSSNVFLRNGSRLYLDVGSHPEYATAECDELPVLIAHDKAGERILQDLVVDAETRLAEEGIGGDIYLFKNNTDSAGNSYGCHENFLIARGGEFAKIADGLIPFLVTRQLIAGAGKVLQSPRGASYCLSQRADHIWEGVSSATTRSRPIINTRDEPHADAERYRRLHVIVGDSNMSETTTLLKVGTAALVLEMIESGVPMRDFTFENPIRAIREISHDTTGRKAVRLAGGGDISALDAQTEYYEKAAAFVANRGTDPVTHQVLDLWRRTLEAVQTQDFTKVDTEIDWIIKKKLIDAYAAKHGLDLTHPRIAQLDLTYHDVRPGRGLHSLLAARGRAARVVTDGQITTAMTVPPQTTRARLRGEFVAAAQDAGRDYTVDWVHLKLNDQAQRTVLLKDPFRSTDDRVTKLIEAM.

Glu9 lines the Mg(2+) pocket. Arg53 contributes to the ATP binding site. Position 55 (Tyr55) interacts with Mg(2+). Asp57 functions as the Proton acceptor in the catalytic mechanism. Position 63 (Glu63) interacts with Mg(2+). ATP-binding residues include Thr66 and Trp419.

Belongs to the Pup ligase/Pup deamidase family. Pup-conjugating enzyme subfamily.

It catalyses the reaction ATP + [prokaryotic ubiquitin-like protein]-L-glutamate + [protein]-L-lysine = ADP + phosphate + N(6)-([prokaryotic ubiquitin-like protein]-gamma-L-glutamyl)-[protein]-L-lysine.. It functions in the pathway protein degradation; proteasomal Pup-dependent pathway. Its pathway is protein modification; protein pupylation. Functionally, catalyzes the covalent attachment of the prokaryotic ubiquitin-like protein modifier Pup to the proteasomal substrate proteins, thereby targeting them for proteasomal degradation. This tagging system is termed pupylation. The ligation reaction involves the side-chain carboxylate of the C-terminal glutamate of Pup and the side-chain amino group of a substrate lysine. This chain is Pup--protein ligase, found in Nakamurella multipartita (strain ATCC 700099 / DSM 44233 / CIP 104796 / JCM 9543 / NBRC 105858 / Y-104) (Microsphaera multipartita).